Reading from the N-terminus, the 174-residue chain is NADH-ubiquinone oxidoreductase chain 6 (174 aa).

The next 6 helical transmembrane spans lie at 1 to 21 (MTYA…GFSS), 24 to 44 (SPIY…AIIL), 47 to 67 (GGGY…MVVF), 86 to 106 (VEVL…VLWV), 111 to 131 (GMVV…EGEG), and 151 to 171 (WLVV…IEIA).

It belongs to the complex I subunit 6 family. In terms of assembly, core subunit of respiratory chain NADH dehydrogenase (Complex I) which is composed of 45 different subunits.

It localises to the mitochondrion inner membrane. It catalyses the reaction a ubiquinone + NADH + 5 H(+)(in) = a ubiquinol + NAD(+) + 4 H(+)(out). Its function is as follows. Core subunit of the mitochondrial membrane respiratory chain NADH dehydrogenase (Complex I) which catalyzes electron transfer from NADH through the respiratory chain, using ubiquinone as an electron acceptor. Essential for the catalytic activity and assembly of complex I. This chain is NADH-ubiquinone oxidoreductase chain 6 (MT-ND6), found in Pan troglodytes (Chimpanzee).